The following is a 1033-amino-acid chain: Potassium-transporting ATPase alpha chain 2 (1033 aa).

The Cytoplasmic portion of the chain corresponds to 1-96 (MRRKTLEIYS…NALSPPKQTP (96 aa)). The chain crosses the membrane as a helical span at residues 97 to 117 (EIIKFLKQMIGGFSILLWVGA). Residues 118–140 (ILCWIAYGIQYASNQSGSLDNVY) lie on the Lumenal side of the membrane. Residues 141-161 (LGVVLALVVILTGIFAYYQEA) form a helical membrane-spanning segment. At 162-297 (KSTNIMSSFS…NEKTPIATEI (136 aa)) the chain is on the cytoplasmic side. The chain crosses the membrane as a helical span at residues 298–317 (EHFVHIVAGVAVSIGILFFI). Over 318-329 (IAVSLKYRVLDS) the chain is Lumenal. Residues 330 to 347 (IIFLIGIIVANVPEGLLA) traverse the membrane as a helical segment. The Cytoplasmic segment spans residues 348–781 (TVTVTLSLTA…EEGRLIFDNL (434 aa)). Catalysis depends on Asp385, which acts as the 4-aspartylphosphate intermediate. The Mg(2+) site is built by Asp726 and Asp730. Residues 782 to 801 (KKTIAYTLTKNIAELCPFLV) form a helical membrane-spanning segment. Over 802–811 (YIIVGLPLPI) the chain is Lumenal. The chain crosses the membrane as a helical span at residues 812 to 832 (GTITILFIDLGTDIIPSIALA). The Cytoplasmic portion of the chain corresponds to 833 to 852 (YEKVESDIMNRKPRHKKKDR). A helical transmembrane segment spans residues 853 to 875 (LVNHQLAIYSYLHIGLMQALGAF). Residues 876–927 (LVYFTVYAQQGFWPTSLIQLRVKWEQDYVNDLEDSYGQQWTRYQRKYLEWTG) are Lumenal-facing. Residues 928–947 (YTAFFVGIMVQQIADLIIRK) form a helical membrane-spanning segment. Topologically, residues 948–961 (TRRNSIFQQGLFRN) are cytoplasmic. Residue Ser952 is modified to Phosphoserine; by PKA. A helical membrane pass occupies residues 962–980 (KVIWVGITSQIIVALILSC). The Lumenal portion of the chain corresponds to 981–995 (GLGSITALNFTMLRV). A helical membrane pass occupies residues 996 to 1016 (QYWFVAVPHAILIWVYDEVRK). At 1017 to 1033 (LFLRLYPGSWWDKNMYY) the chain is on the cytoplasmic side.

The protein belongs to the cation transport ATPase (P-type) (TC 3.A.3) family. Type IIC subfamily. As to quaternary structure, composed of two subunits: alpha (catalytic) and beta. As to expression, found in skin, kidney and distal colon.

It localises to the membrane. The enzyme catalyses K(+)(out) + ATP + H2O + H(+)(in) = K(+)(in) + ADP + phosphate + 2 H(+)(out). Catalyzes the hydrolysis of ATP coupled with the exchange of H(+) and K(+) ions across the plasma membrane. Responsible for potassium absorption in various tissues. The polypeptide is Potassium-transporting ATPase alpha chain 2 (ATP12A) (Cavia porcellus (Guinea pig)).